Here is a 274-residue protein sequence, read N- to C-terminus: tRNA-cytidine(32) 2-sulfurtransferase (274 aa).

Residues 40 to 45 (SGGKDS) carry the PP-loop motif motif. C115, C118, and C206 together coordinate [4Fe-4S] cluster.

The protein belongs to the TtcA family. As to quaternary structure, homodimer. Mg(2+) serves as cofactor. The cofactor is [4Fe-4S] cluster.

It localises to the cytoplasm. The catalysed reaction is cytidine(32) in tRNA + S-sulfanyl-L-cysteinyl-[cysteine desulfurase] + AH2 + ATP = 2-thiocytidine(32) in tRNA + L-cysteinyl-[cysteine desulfurase] + A + AMP + diphosphate + H(+). It functions in the pathway tRNA modification. Catalyzes the ATP-dependent 2-thiolation of cytidine in position 32 of tRNA, to form 2-thiocytidine (s(2)C32). The sulfur atoms are provided by the cysteine/cysteine desulfurase (IscS) system. The sequence is that of tRNA-cytidine(32) 2-sulfurtransferase from Pseudomonas fluorescens (strain ATCC BAA-477 / NRRL B-23932 / Pf-5).